Reading from the N-terminus, the 111-residue chain is Cytochrome c oxidase subunit 7A2-like, mitochondrial (111 aa).

The N-terminal 54 residues, 1–54, are a transit peptide targeting the mitochondrion; that stretch reads MYYKFSSFTQKLAGAWASEAYTPQGLKPVSTEAPPIIFATPTKLTSSVTAYDYS. The residue at position 68 (Lys-68) is an N6-acetyllysine. The helical transmembrane segment at 79 to 104 threads the bilayer; sequence PDQMLYRTTMALTLGGTIYCLIALYM.

The protein belongs to the cytochrome c oxidase VIIa family.

It is found in the mitochondrion inner membrane. Functionally, non-functional protein. In contrast to the protein found in other strains (AC Q99KD6), cannot induce the assembly of mitochondrial respiratory supercomplexes. The polypeptide is Cytochrome c oxidase subunit 7A2-like, mitochondrial (Mus musculus (Mouse)).